The chain runs to 172 residues: UPF0102 protein AM1_3954 (172 aa).

Belongs to the UPF0102 family.

The polypeptide is UPF0102 protein AM1_3954 (Acaryochloris marina (strain MBIC 11017)).